Here is a 495-residue protein sequence, read N- to C-terminus: Oxidoreductase AflY (495 aa).

The interval 1–22 (MGSHAPAVAGKPDPKKGPYQAT) is disordered.

It belongs to the questin oxidase family.

Its pathway is mycotoxin biosynthesis; aflatoxin biosynthesis. Functionally, oxidoreductase; part of the gene cluster that mediates the biosynthesis of aflatoxins, a group of polyketide-derived furanocoumarins, and part of the most toxic and carcinogenic compounds among the known mycotoxins. The four major aflatoxins produced by A.parasiticus are aflatoxin B1 (AFB1), aflatoxin B2 (AFB2), aflatoxin G1 (AFG1) and aflatoxin G2 (AFG2). Within the aflatoxin pathway, the oxidoreductase aflY seems to be involved in the conversion of versicolorin A (VERA) to demethylsterigmatocystin (DMST), through probable Baeyer-Villiger oxidation required for the formation of the xanthone ring. The biosynthesis of aflatoxins begins with the norsolorinic acid synthase aflC that combines a hexanoyl starter unit produced by the fatty acid synthase aflA/aflB and 7 malonyl-CoA extender units to synthesize the precursor NOR. The second step is the conversion of NOR to averantin and requires the norsolorinic acid ketoreductase aflD, which catalyzes the dehydration of norsolorinic acid to form (1'S)-averantin. The norsolorinic acid reductases aflE and aflF may also play a role in the conversion of NOR to AVN. The cytochrome P450 monooxygenase aflG then catalyzes the hydroxylation of AVN to 5'hydroxyaverantin (HAVN). The next step is performed by the 5'-hydroxyaverantin dehydrogenase aflH that transforms HAVN to 5'-oxoaverantin (OAVN) which is further converted to averufin (AVF) by aflK that plays a dual role in the pathway, as a 5'-oxoaverantin cyclase that mediates conversion of 5'-oxoaverantin, as well as a versicolorin B synthase in a later step in the pathway. The averufin oxidase aflI catalyzes the conversion of AVF to versiconal hemiacetal acetate (VHA). VHA is then the substrate for the versiconal hemiacetal acetate esterase aflJ to yield versiconal (VAL). Versicolorin B synthase aflK then converts VAL to versicolorin B (VERB) by closing the bisfuran ring of aflatoxin which is required for DNA-binding, thus giving to aflatoxin its activity as a mutagen. Then, the activity of the versicolorin B desaturase aflL leads to versicolorin A (VERA). A branch point starts from VERB since it can also be converted to dihydrodemethylsterigmatocystin (DMDHST), probably also by aflL, VERA being a precursor for aflatoxins B1 and G1, and DMDHST for aflatoxins B2 and G2. Next, the versicolorin reductase aflM and the cytochrome P450 monooxygenase aflN are involved in conversion of VERA to demethylsterigmatocystin (DMST). AflX and aflY seem also involved in this step, through probable aflX-mediated epoxide ring-opening step following versicolorin A oxidation and aflY-mediated Baeyer-Villiger oxidation required for the formation of the xanthone ring. The methyltransferase aflO then leads to the modification of DMST to sterigmatocystin (ST), and of DMDHST to dihydrosterigmatocystin (DHST). Both ST and DHST are then substrates of the O-methyltransferase aflP to yield O-methylsterigmatocystin (OMST) and dihydro-O-methylsterigmatocystin (DHOMST), respectively. Finally OMST is converted to aflatoxins B1 and G1, and DHOMST to aflatoxins B2 and G2, via the action of several enzymes including O-methylsterigmatocystin oxidoreductase aflQ, the cytochrome P450 monooxygenase aflU, but also the NADH-dependent flavin oxidoreductase nadA which is specifically required for the synthesis of AFG1. This Aspergillus parasiticus (strain ATCC 56775 / NRRL 5862 / SRRC 143 / SU-1) protein is Oxidoreductase AflY.